A 245-amino-acid chain; its full sequence is NAD(P)H-hydrate epimerase (245 aa).

A YjeF N-terminal domain is found at Ala16–Val224. Asn68–Asp72 contacts (6S)-NADPHX. Positions 69 and 131 each coordinate K(+). (6S)-NADPHX contacts are provided by residues Gly135–Pro141 and Asp164. A K(+)-binding site is contributed by Ser167.

Belongs to the NnrE/AIBP family. The cofactor is K(+).

The protein resides in the cytoplasm. The protein localises to the mitochondrion. It carries out the reaction (6R)-NADHX = (6S)-NADHX. It catalyses the reaction (6R)-NADPHX = (6S)-NADPHX. Catalyzes the epimerization of the S- and R-forms of NAD(P)HX, a damaged form of NAD(P)H that is a result of enzymatic or heat-dependent hydration. This is a prerequisite for the S-specific NAD(P)H-hydrate dehydratase to allow the repair of both epimers of NAD(P)HX. This Yarrowia lipolytica (strain CLIB 122 / E 150) (Yeast) protein is NAD(P)H-hydrate epimerase.